A 739-amino-acid chain; its full sequence is Adenosylcobalamin-dependent ribonucleoside-triphosphate reductase (739 aa).

Cysteines 119 and 419 form a disulfide. The segment at 147–158 (SMPFSFLFDELM) is effector region-1. Positions 168–313 (ARSNISQIPR…ICNLIGKAVV (146 aa)) are effector region-2. Residues Cys408 and Glu410 contribute to the active site. An adenosylcobalamin-binding-1 region spans residues 565-626 (FHYGAYLIQR…NPNFASAGTV (62 aa)). Residues 685–724 (LQQAPKEPIDKETYEKRSQEITGNVEEVFSQLNSDVKDLE) form an adenosylcobalamin-binding-2 region.

Belongs to the class II ribonucleoside-triphosphate reductase family. Monomer. The cofactor is adenosylcob(III)alamin.

It catalyses the reaction a 2'-deoxyribonucleoside 5'-triphosphate + [thioredoxin]-disulfide + H2O = a ribonucleoside 5'-triphosphate + [thioredoxin]-dithiol. Its activity is regulated as follows. Allosterically regulated by ATP and dNTP. The polypeptide is Adenosylcobalamin-dependent ribonucleoside-triphosphate reductase (rtpR) (Lactobacillus delbrueckii subsp. bulgaricus (strain ATCC 11842 / DSM 20081 / BCRC 10696 / JCM 1002 / NBRC 13953 / NCIMB 11778 / NCTC 12712 / WDCM 00102 / Lb 14)).